The sequence spans 294 residues: Elongation factor Ts (294 aa).

The interval 81 to 84 (TDFV) is involved in Mg(2+) ion dislocation from EF-Tu.

It belongs to the EF-Ts family.

The protein localises to the cytoplasm. Functionally, associates with the EF-Tu.GDP complex and induces the exchange of GDP to GTP. It remains bound to the aminoacyl-tRNA.EF-Tu.GTP complex up to the GTP hydrolysis stage on the ribosome. This is Elongation factor Ts from Levilactobacillus brevis (strain ATCC 367 / BCRC 12310 / CIP 105137 / JCM 1170 / LMG 11437 / NCIMB 947 / NCTC 947) (Lactobacillus brevis).